The sequence spans 131 residues: UPF0102 protein YraN (131 aa).

A compositionally biased stretch (polar residues) spans 1–19 (MATVPTRSGSPRQLTTKQT). The tract at residues 1–21 (MATVPTRSGSPRQLTTKQTGD) is disordered.

The protein belongs to the UPF0102 family.

This chain is UPF0102 protein YraN, found in Shigella flexneri serotype 5b (strain 8401).